The chain runs to 399 residues: Ras-related GTP-binding protein C (399 aa).

A disordered region spans residues 1–20 (MSLQYGAEETPLAGSYGAAD). Ser-2 bears the N-acetylserine mark. Residues Ser-2 and Ser-15 each carry the phosphoserine modification. GDP-binding residues include Arg-71, Ser-72, Gly-73, Lys-74, Ser-75, Ser-76, Thr-90, Glu-94, Thr-96, His-178, Lys-179, Asp-181, Ser-219, and Ile-220. Lys-74 provides a ligand contact to GTP. Thr-90 contacts GTP. GTP is bound at residue Thr-96. Thr-96 is modified (phosphothreonine). Residue Asp-181 participates in GTP binding.

Belongs to the GTR/RAG GTP-binding protein family. In terms of assembly, forms a heterodimer with RRAGA, in a sequence-independent manner, and RRAGB. Heterodimerization stabilizes proteins of the heterodimer. The GDP-bound form of RRAGC (in complex with the GTP-bound form of RRAGA or RRAGB), interacts with RPTOR, thereby promoting recruitment of mTORC1 to the lysosomes. Component of the lysosomal folliculin complex (LFC), composed of FLCN, FNIP1 (or FNIP2), RagA/RRAGA or RagB/RRAGB GDP-bound, RagC/RRAGC or RagD/RRAGD GTP-bound, and Ragulator. Interacts with NOL8. Interacts with SH3BP4; the interaction with this negative regulator is most probably direct, preferentially occurs with the inactive GDP-bound form of RRAGB, is negatively regulated by amino acids and prevents interaction with RPTOR. The Rag heterodimer interacts with SLC38A9; the probable amino acid sensor. Interacts with SESN1, SESN2 and SESN3. Interacts with PIP4P1. The Rag heterodimer interacts with the Ragulator complex. The GDP-bound form interacts with TFEB. The GDP-bound form interacts with TFE3.

It is found in the cytoplasm. The protein localises to the nucleus. Its subcellular location is the lysosome membrane. It carries out the reaction GTP + H2O = GDP + phosphate + H(+). With respect to regulation, the activation of RagC/RRAGC is mediated by a GTPase activating protein (GAP). In high-amino acid conditions, activated by GTPase activating protein FLCN that stimulates RRAGC GTPase activity to turn it into its active GDP-bound form. In response to amino acid depletion, the GATOR1 complex inactivates RagC/RRAGC by securing the GTP-bound inactive form. Its function is as follows. Guanine nucleotide-binding protein that plays a crucial role in the cellular response to amino acid availability through regulation of the mTORC1 signaling cascade. Forms heterodimeric Rag complexes with RagA/RRAGA or RagB/RRAGB and cycles between an inactive GTP-bound and an active GDP-bound form: RagC/RRAGC is in its active form when GDP-bound RagC/RRAGC forms a complex with GTP-bound RagA/RRAGA (or RagB/RRAGB) and in an inactive form when GTP-bound RagC/RRAGC heterodimerizes with GDP-bound RagA/RRAGA (or RagB/RRAGB). In its GDP-bound active form, promotes the recruitment of mTORC1 to the lysosomes and its subsequent activation by the GTPase RHEB. This is a crucial step in the activation of the MTOR signaling cascade by amino acids. Also plays a central role in the non-canonical mTORC1 complex, which acts independently of RHEB and specifically mediates phosphorylation of MiT/TFE factors TFEB and TFE3: GDP-bound RagC/RRAGC mediates recruitment of MiT/TFE factors TFEB and TFE3. This Homo sapiens (Human) protein is Ras-related GTP-binding protein C.